The following is a 164-amino-acid chain: uncharacterized protein (164 aa).

This is an uncharacterized protein from Mycobacterium tuberculosis (strain CDC 1551 / Oshkosh).